The following is a 453-amino-acid chain: Choline kinase alpha (453 aa).

Residues 22–81 (CGGSAAPTPGVGQQRDAAGELESKQLGGRSQPLALPPPPPPPLPLPPPPSPPLADEQPEP) are disordered. Residues 55-73 (ALPPPPPPPLPLPPPPSPP) are compositionally biased toward pro residues. Ser-71 is subject to Phosphoserine. ATP is bound by residues 113-119 (RGGLSNM), Arg-142, and 203-209 (QFIPSRR). Residue 115–117 (GLS) coordinates phosphocholine. Lys-243 is subject to N6-acetyllysine. Ser-275 is modified (phosphoserine). Gln-304 and Asp-326 together coordinate ATP.

The protein belongs to the choline/ethanolamine kinase family. In terms of assembly, heterodimer with CHKB. Homodimer. Monomer; acetylation by KAT5 promotes dissociation of the homodimer and monomerization. Phosphorylated at Ser-275 by AMPK in response to glucose deprivation, leading to localization to lipid droplets. Post-translationally, acetylated by KAT5 at Lys-243 following phosphorylation by AMPK, leading to monomerization and conversion into a tyrosine-protein kinase. In terms of tissue distribution, testis, brain, lung, kidney and liver.

The protein localises to the cytoplasm. It is found in the cytosol. It localises to the lipid droplet. The enzyme catalyses choline + ATP = phosphocholine + ADP + H(+). It catalyses the reaction ethanolamine + ATP = phosphoethanolamine + ADP + H(+). It carries out the reaction L-tyrosyl-[protein] + ATP = O-phospho-L-tyrosyl-[protein] + ADP + H(+). It functions in the pathway phospholipid metabolism; phosphatidylcholine biosynthesis; phosphocholine from choline: step 1/1. It participates in phospholipid metabolism; phosphatidylethanolamine biosynthesis; phosphatidylethanolamine from ethanolamine: step 1/3. Its function is as follows. Plays a key role in phospholipid biosynthesis by catalyzing the phosphorylation of free choline to phosphocholine, the first step in phosphatidylcholine biosynthesis. Also phosphorylates ethanolamine, thereby contributing to phosphatidylethanolamine biosynthesis. Has higher activity with choline. In terms of biological role, this isoform plays a key role in lipolysis of lipid droplets following glucose deprivation. In response to glucose deprivation, phosphorylated by AMPK, promoting localization to lipid droplets. Phosphorylation is followed by acetylation by KAT5, leading to dissociation of the homodimer into a monomer. Monomeric CHKA isoform 1 is converted into a tyrosine-protein kinase, which phosphorylates lipid droplet structural proteins PLIN2 and PLIN3, leading to lipolysis of lipid droplets. The protein is Choline kinase alpha (Chka) of Rattus norvegicus (Rat).